The following is a 191-amino-acid chain: A-type ATP synthase subunit E (191 aa).

The protein belongs to the V-ATPase E subunit family. As to quaternary structure, has multiple subunits with at least A(3), B(3), C, D, E, F, H, I and proteolipid K(x).

It localises to the cell membrane. Its function is as follows. Component of the A-type ATP synthase that produces ATP from ADP in the presence of a proton gradient across the membrane. The polypeptide is A-type ATP synthase subunit E (Methanoregula boonei (strain DSM 21154 / JCM 14090 / 6A8)).